Reading from the N-terminus, the 526-residue chain is Probable carboxypeptidase 2 (526 aa).

The first 21 residues, 1–21, serve as a signal peptide directing secretion; it reads MVAYRLLALISLGLGSHCASA. A glycan (N-linked (GlcNAc...) asparagine) is linked at Asn46. The segment at 53 to 76 is disordered; it reads PAFTSPGTVPRGFSDGTSGPTRDE. The Peptidase M14 domain occupies 71–351; that stretch reads GPTRDETMEG…VMAKSILQTA (281 aa). The N-linked (GlcNAc...) asparagine glycan is linked to Asn116. Residues His136, Glu139, and His224 each contribute to the Zn(2+) site. Catalysis depends on Glu322, which acts as the Proton donor/acceptor. Asn393 and Asn459 each carry an N-linked (GlcNAc...) asparagine glycan.

It belongs to the peptidase M14 family. Requires Zn(2+) as cofactor.

The protein resides in the secreted. In terms of biological role, extracellular metalloprotease that contributes to pathogenicity. The protein is Probable carboxypeptidase 2 (MCPB) of Arthroderma benhamiae (strain ATCC MYA-4681 / CBS 112371) (Trichophyton mentagrophytes).